A 110-amino-acid chain; its full sequence is Large ribosomal subunit protein P2 (110 aa).

Ser-59 bears the O-(pantetheine 4'-phosphoryl)serine; in acyl carrier protein form mark. Positions 62 to 110 (LASVPSGGAAPAAAAGGAAAGGAAEEKAEDKPAEKDEESDDDMGFGLFD) are disordered. The segment covering 63-84 (ASVPSGGAAPAAAAGGAAAGGA) has biased composition (low complexity). Residues 85–95 (AEEKAEDKPAE) are compositionally biased toward basic and acidic residues. A Phosphoserine; in ribosomal stalk form modification is found at Ser-100.

The protein belongs to the eukaryotic ribosomal protein P1/P2 family. In terms of assembly, the phosphorylated form is part of the ribosomal stalk involved in the interaction of the elongation factors with the ribosome during protein synthesis. The phosphopantetheinylated form is part of the 10S triacylglycerol biosynthetic complex involved in de novo fatty acid biosynthesis. In terms of processing, 4'-phosphopantetheine is transferred from CoA to a specific serine by acpS. This modification is essential for activity because fatty acids are bound in thioester linkage to the sulfhydryl of the prosthetic group.

The protein resides in the cytoplasm. In terms of biological role, probable bifunctional protein. The phosphorylated protein plays an important role in the elongation step of protein synthesis. The phosphopantetheinylated protein acts as an acyl carrier protein. The polypeptide is Large ribosomal subunit protein P2 (Rhodotorula glutinis (Yeast)).